A 441-amino-acid chain; its full sequence is Ribulose bisphosphate carboxylase large chain (441 aa).

Lys-4 is modified (N6,N6,N6-trimethyllysine). Residues Asn-113 and Thr-163 each contribute to the substrate site. The active-site Proton acceptor is the Lys-165. Residue Lys-167 participates in substrate binding. Lys-191, Asp-193, and Glu-194 together coordinate Mg(2+). Lys-191 is modified (N6-carboxylysine). His-284 acts as the Proton acceptor in catalysis. Substrate-binding residues include Arg-285, His-317, and Ser-369.

This sequence belongs to the RuBisCO large chain family. Type I subfamily. In terms of assembly, heterohexadecamer of 8 large chains and 8 small chains; disulfide-linked. The disulfide link is formed within the large subunit homodimers. It depends on Mg(2+) as a cofactor. Post-translationally, the disulfide bond which can form in the large chain dimeric partners within the hexadecamer appears to be associated with oxidative stress and protein turnover.

Its subcellular location is the plastid. It localises to the chloroplast. The enzyme catalyses 2 (2R)-3-phosphoglycerate + 2 H(+) = D-ribulose 1,5-bisphosphate + CO2 + H2O. It carries out the reaction D-ribulose 1,5-bisphosphate + O2 = 2-phosphoglycolate + (2R)-3-phosphoglycerate + 2 H(+). RuBisCO catalyzes two reactions: the carboxylation of D-ribulose 1,5-bisphosphate, the primary event in carbon dioxide fixation, as well as the oxidative fragmentation of the pentose substrate in the photorespiration process. Both reactions occur simultaneously and in competition at the same active site. The protein is Ribulose bisphosphate carboxylase large chain of Heliamphora nutans (Venezuelan marsh pitcher plant).